Reading from the N-terminus, the 341-residue chain is MKALSKLKPEEGIWMVDAPKPEVGHNDLLIKIRKTAICGTDVHIYNWDEWSQNTIPVPMVVGHEYVGEVVEIGQEVRGFQIGDRVSGEGHITCGHCRNCRAGRTHLCRNTSGVGVNREGAFAEYLVIPAFNAFKIPDDISDDLASIFDPFGNAVHTALSFDLVGEDVLITGAGPIGIMAAAVCRHVGARHVVITDVNEYRLELAKKMGATRAVNVAKEKLEDVMQDLGMTEGFDVGLEMSGVPAAFHSMLDTMNHGGKIAMLGIPGGDMAIDWSKVIFKGLIIKGIYGREMFETWYKMASLIQSGLDISPIITHHYNVDDFQAGFDAMRSGQSGKVILSWD.

A Zn(2+)-binding site is contributed by C38. Residues T40 and H43 each act as charge relay system in the active site. Positions 63, 64, 93, 96, 99, and 107 each coordinate Zn(2+). NAD(+) is bound by residues I175, D195, R200, 262-264 (LGI), and 286-287 (IY).

It belongs to the zinc-containing alcohol dehydrogenase family. In terms of assembly, homotetramer. Requires Zn(2+) as cofactor.

The protein resides in the cytoplasm. It carries out the reaction L-threonine + NAD(+) = (2S)-2-amino-3-oxobutanoate + NADH + H(+). It functions in the pathway amino-acid degradation; L-threonine degradation via oxydo-reductase pathway; glycine from L-threonine: step 1/2. Functionally, catalyzes the NAD(+)-dependent oxidation of L-threonine to 2-amino-3-ketobutyrate. The chain is L-threonine 3-dehydrogenase from Shewanella loihica (strain ATCC BAA-1088 / PV-4).